The sequence spans 127 residues: EF-hand calcium-binding domain-containing protein 10 (127 aa).

In terms of domain architecture, EF-hand spans 63-98 (MDNSNIVAMFEMMDSSGRGTISFVQYKEALKTLGLC).

The sequence is that of EF-hand calcium-binding domain-containing protein 10 (EFCAB10) from Homo sapiens (Human).